The chain runs to 403 residues: MAQSKPVKKIVLAYSGGLDTSVILTWLKETYGCEVIAFTADVGQKEELSGLEEKGIKTGASKVYIQDLRLEFARDFIFPAIQGNALYEMRYLLGTSLARPLIAKAMVEVAEKEGADAFAHGATGKGNDQVRFELGVKSLAPEKTIIAPWRIWNFGGRSDLIEYAKSKGIPVSITVEKPYSMDRNLMHISYEGGILEDPYREPDEKMFLLTTSPEKAPDAPEYLELDFQEGNCVAINGKKLNPYEVMEALNTIAGKHGVGRVDIVENRLVGIKSRGVYETPGGTVLFLAHRDLESITIDRDTQHHKDKLSIEFAELIYNGHWFSSRMKAVRAFITETQRYVTGAVKVKLYKGTCSIVGRKSSVSLYNPKMATFEKEELYNQKDAEGFINIYGLPAQETARLRKK.

Residues 13 to 21 (AYSGGLDTS) and A40 contribute to the ATP site. Residues Y91 and S96 each coordinate L-citrulline. G121 is a binding site for ATP. Positions 123, 127, and 128 each coordinate L-aspartate. L-citrulline is bound at residue N127. L-citrulline is bound by residues R131, S180, S189, E265, and Y277.

The protein belongs to the argininosuccinate synthase family. Type 1 subfamily. Homotetramer.

It is found in the cytoplasm. It catalyses the reaction L-citrulline + L-aspartate + ATP = 2-(N(omega)-L-arginino)succinate + AMP + diphosphate + H(+). It functions in the pathway amino-acid biosynthesis; L-arginine biosynthesis; L-arginine from L-ornithine and carbamoyl phosphate: step 2/3. This is Argininosuccinate synthase from Leptospira borgpetersenii serovar Hardjo-bovis (strain JB197).